Consider the following 211-residue polypeptide: Agamous-like MADS-box protein AGL12 (211 aa).

The MADS-box domain occupies 3-57; the sequence is RGKIQLKRIENPVHRQVTFCKRRTGLLKKAKELSVLCDAEIGVVIFSPQGKLFEL. One can recognise a K-box domain in the interval 95–185; the sequence is NLDPKDEINV…LEKIEENNNS (91 aa).

As to expression, preferentially expressed in roots. In root meristem, expressed in external cells of columella, lateral root cap and atrichoblasts. In mature root, expressed in the central cylinder. Expressed in leaf vasculature, young floral meristems and nectaries.

Its subcellular location is the nucleus. In terms of biological role, probable transcription activator that regulates root development by controlling cell proliferation in root meristem. May mediate responses to auxin in the root. May act as promoter of the flowering transition through up-regulation of SOC, FT and LFY. The sequence is that of Agamous-like MADS-box protein AGL12 from Arabidopsis thaliana (Mouse-ear cress).